A 176-amino-acid chain; its full sequence is Ribosome maturation factor RimM (176 aa).

Positions 93–166 constitute a PRC barrel domain; sequence ADEYYHADLI…QVVIEPPNEI (74 aa).

Belongs to the RimM family. As to quaternary structure, binds ribosomal protein uS19.

The protein resides in the cytoplasm. An accessory protein needed during the final step in the assembly of 30S ribosomal subunit, possibly for assembly of the head region. Essential for efficient processing of 16S rRNA. May be needed both before and after RbfA during the maturation of 16S rRNA. It has affinity for free ribosomal 30S subunits but not for 70S ribosomes. The protein is Ribosome maturation factor RimM of Rhodopseudomonas palustris (strain ATCC BAA-98 / CGA009).